The sequence spans 278 residues: Orotidine 5'-phosphate decarboxylase (278 aa).

The Proton donor role is filled by Lys96.

This sequence belongs to the OMP decarboxylase family. Type 2 subfamily.

The catalysed reaction is orotidine 5'-phosphate + H(+) = UMP + CO2. The protein operates within pyrimidine metabolism; UMP biosynthesis via de novo pathway; UMP from orotate: step 2/2. The polypeptide is Orotidine 5'-phosphate decarboxylase (pyrF) (Streptomyces coelicolor (strain ATCC BAA-471 / A3(2) / M145)).